A 538-amino-acid polypeptide reads, in one-letter code: 2-isopropylmalate synthase (538 aa).

One can recognise a Pyruvate carboxyltransferase domain in the interval 6-277 (LIIFDTTLRD…DSTVPLSTID (272 aa)). Mn(2+) is bound by residues Asp15, His206, His208, and Asn242. The interval 406-538 (RLEQVQVSCG…AHPDAAAQKL (133 aa)) is regulatory domain.

This sequence belongs to the alpha-IPM synthase/homocitrate synthase family. LeuA type 1 subfamily. As to quaternary structure, homodimer. Mn(2+) is required as a cofactor.

The protein localises to the cytoplasm. The enzyme catalyses 3-methyl-2-oxobutanoate + acetyl-CoA + H2O = (2S)-2-isopropylmalate + CoA + H(+). It functions in the pathway amino-acid biosynthesis; L-leucine biosynthesis; L-leucine from 3-methyl-2-oxobutanoate: step 1/4. Functionally, catalyzes the condensation of the acetyl group of acetyl-CoA with 3-methyl-2-oxobutanoate (2-ketoisovalerate) to form 3-carboxy-3-hydroxy-4-methylpentanoate (2-isopropylmalate). This chain is 2-isopropylmalate synthase, found in Gloeobacter violaceus (strain ATCC 29082 / PCC 7421).